A 627-amino-acid polypeptide reads, in one-letter code: Phosphomethylpyrimidine synthase (627 aa).

Substrate contacts are provided by residues N233, M262, Y291, H327, 347–349, 388–391, and E427; these read SRG and DGLR. H431 lines the Zn(2+) pocket. Y454 serves as a coordination point for substrate. H495 contacts Zn(2+). Residues C575, C578, and C583 each coordinate [4Fe-4S] cluster.

This sequence belongs to the ThiC family. As to quaternary structure, homodimer. Requires [4Fe-4S] cluster as cofactor.

It catalyses the reaction 5-amino-1-(5-phospho-beta-D-ribosyl)imidazole + S-adenosyl-L-methionine = 4-amino-2-methyl-5-(phosphooxymethyl)pyrimidine + CO + 5'-deoxyadenosine + formate + L-methionine + 3 H(+). It participates in cofactor biosynthesis; thiamine diphosphate biosynthesis. Catalyzes the synthesis of the hydroxymethylpyrimidine phosphate (HMP-P) moiety of thiamine from aminoimidazole ribotide (AIR) in a radical S-adenosyl-L-methionine (SAM)-dependent reaction. This chain is Phosphomethylpyrimidine synthase, found in Acidithiobacillus ferrooxidans (strain ATCC 23270 / DSM 14882 / CIP 104768 / NCIMB 8455) (Ferrobacillus ferrooxidans (strain ATCC 23270)).